Here is a 149-residue protein sequence, read N- to C-terminus: Calmodulin (149 aa).

An N-acetylalanine modification is found at Ala2. EF-hand domains lie at 8-43 (EQIAEFKEAFSLFDKDGDGTITTKELGTVMRSLGQN), 44-79 (PTEAELQDMINEVDTDGNGTIDFPEFLTMMARKMKE), 81-116 (DSEEEIREAFRVFDKDGNGFISAAELRHVMTNLGEK), and 117-149 (LTDEEVDEMIREADTDGDGQVNYEEFVGMMTSK). Residues Asp21, Asp23, Asp25, Thr27, Glu32, Asp57, Asp59, Asn61, Thr63, Glu68, Asp94, Asp96, Asn98, and Glu105 each contribute to the Ca(2+) site. Lys116 is modified (N6,N6,N6-trimethyllysine). Ca(2+) is bound by residues Asp130, Asp132, Asp134, Gln136, and Glu141.

The protein belongs to the calmodulin family.

In terms of biological role, calmodulin mediates the control of a large number of enzymes, ion channels and other proteins by Ca(2+). Among the enzymes to be stimulated by the calmodulin-Ca(2+) complex are a number of protein kinases and phosphatases. The sequence is that of Calmodulin from Suberites domuncula (Sponge).